Reading from the N-terminus, the 753-residue chain is Catalase-peroxidase (753 aa).

The segment at residues 90 to 238 (WHSAGTYRVT…LASSHMGLIY (149 aa)) is a cross-link (tryptophyl-tyrosyl-methioninium (Trp-Tyr) (with M-264)). The active-site Proton acceptor is histidine 91. The segment at 196–220 (SEGQEGHEGHGVVQGDESKKQHTDI) is disordered. The tryptophyl-tyrosyl-methioninium (Tyr-Met) (with W-90) cross-link spans 238–264 (YVNPEGPDGIPDPVASAKDIRVTFGRM). Histidine 279 serves as a coordination point for heme b.

The protein belongs to the peroxidase family. Peroxidase/catalase subfamily. In terms of assembly, homodimer or homotetramer. Heme b serves as cofactor. Formation of the three residue Trp-Tyr-Met cross-link is important for the catalase, but not the peroxidase activity of the enzyme.

Its subcellular location is the cytoplasm. It catalyses the reaction H2O2 + AH2 = A + 2 H2O. It carries out the reaction 2 H2O2 = O2 + 2 H2O. Inhibited by KCN. In terms of biological role, bifunctional enzyme with both catalase and broad-spectrum peroxidase activity. The sequence is that of Catalase-peroxidase from Neurospora crassa (strain ATCC 24698 / 74-OR23-1A / CBS 708.71 / DSM 1257 / FGSC 987).